The following is a 569-amino-acid chain: MSWKLTKKLKETHLASAIGLNSGGSSFTRGLKNSTLSSTSSRKSSDEKSRKSSEDKRSPQSTVVQPGLLQVTIIEARNLKLPSGHVPANYGVSIDNSLLAPPLSNGSGHARSRSHAWWLPYIVVEFDKNEILVDALNTASLENPCWDYQATFDVSRYSKLSLNIYLRSSSSRSRNGMGNDAFLGGIKLSPSFIVNKLTDEWVPLHGGSGELRVQMLYKPNQSTPLTIDAFELLKVVGKGSFGKVMQVRKRDTSRIYALKTMKKAHIVSRSEVDHTLAERTVLAQVNNPFIVPLKFSFQSPGKLYLVLAFVNGGELFHHLQREGCFDTYRAKFYIAELLVALECLHEFNVIYRDLKPENILLDYTGHIALCDFGLCKLNMAKTDRTNTFCGTPEYLAPELLLGHGYTKVVDWWTLGVLLYEMITGLPPFYDENINEMYRKILQDPLRFPDNIDEKAKDLLSGLLTRAPEKRLGSGGAQEIKNHPFFDDIDWKKLCAKKIQPPFKPSVESAIDTSNFDSEFTSEIPMDSVVADSHLSETVQQRFANWSYQRPTTIDTSDDINTIAPGSVIR.

The tract at residues 19–63 (GLNSGGSSFTRGLKNSTLSSTSSRKSSDEKSRKSSEDKRSPQSTV) is disordered. Over residues 31–42 (LKNSTLSSTSSR) the composition is skewed to low complexity. A compositionally biased stretch (basic and acidic residues) spans 43–58 (KSSDEKSRKSSEDKRS). The 158-residue stretch at 45–202 (SDEKSRKSSE…IVNKLTDEWV (158 aa)) folds into the C2 domain. The region spanning 230 to 485 (FELLKVVGKG…AQEIKNHPFF (256 aa)) is the Protein kinase domain. ATP is bound by residues 236–244 (VGKGSFGKV) and Lys259. Asp353 acts as the Proton acceptor in catalysis. Position 387 is a phosphothreonine; by ksg1 (Thr387). The 72-residue stretch at 486 to 557 (DDIDWKKLCA…QRPTTIDTSD (72 aa)) folds into the AGC-kinase C-terminal domain. A phosphoserine; by TORC2 mark is found at Ser527 and Ser546.

This sequence belongs to the protein kinase superfamily. AGC Ser/Thr protein kinase family. Post-translationally, phosphorylated by ksg1 and target of rapamycin complex 2 (TORC2), affecting the kinase activity of gad8 in a nutrient-dependent manner.

It catalyses the reaction L-seryl-[protein] + ATP = O-phospho-L-seryl-[protein] + ADP + H(+). The catalysed reaction is L-threonyl-[protein] + ATP = O-phospho-L-threonyl-[protein] + ADP + H(+). Involved in a signaling module for sexual development and cell growth under stressed conditions. Required for G1 arrest under nitrogen starvation and for growth at high temperature and osmolarity. This is Serine/threonine-protein kinase gad8 from Schizosaccharomyces pombe (strain 972 / ATCC 24843) (Fission yeast).